The sequence spans 197 residues: Signal-regulatory protein delta (197 aa).

An N-terminal signal peptide occupies residues 1-29 (MPIPASPLHPPLPSLLLYLLLELAGVTHV). Positions 31–135 (HVQQTEMSQT…IKEYQSGRGT (105 aa)) constitute an Ig-like V-type domain. An intrachain disulfide couples Cys-51 to Cys-117. The tract at residues 139–158 (VTEQNPRPPKNRPAGRAGSR) is disordered. N-linked (GlcNAc...) asparagine glycosylation is present at Asn-174.

The protein resides in the secreted. The sequence is that of Signal-regulatory protein delta (SIRPD) from Homo sapiens (Human).